We begin with the raw amino-acid sequence, 97 residues long: Serine protease inhibitor Kazal-type 13 (97 aa).

Positions 1–26 are cleaved as a signal peptide; the sequence is MTRRGCWPHRIIFSLILLTWTHVTLA. The 62-residue stretch at 36–97 folds into the Kazal-like domain; it reads NWPKPPCKMY…IEFVKYGKCE (62 aa). Disulfide bonds link cysteine 42/cysteine 78, cysteine 56/cysteine 75, and cysteine 64/cysteine 96.

As to expression, restricted to the epididymis, with highest levels in the initial segment, including epithelial cells, lumen, and sperm (at protein level). Localizes to the sperm heads, where it is restricted to the acrosomal region in epididymal spermatozoa, but not in testicular spermatozoa (at protein level).

It localises to the secreted. In terms of biological role, may be a serine protease inhibitor. Essential for sperm maturation and fertility. Inhibits sperm acrosome reaction, protecting sperm from premature reaction. The protein is Serine protease inhibitor Kazal-type 13 (Spink13) of Rattus norvegicus (Rat).